The following is a 558-amino-acid chain: Formate--tetrahydrofolate ligase (558 aa).

66 to 73 (TPAGEGKT) provides a ligand contact to ATP.

Belongs to the formate--tetrahydrofolate ligase family.

The enzyme catalyses (6S)-5,6,7,8-tetrahydrofolate + formate + ATP = (6R)-10-formyltetrahydrofolate + ADP + phosphate. It participates in one-carbon metabolism; tetrahydrofolate interconversion. This is Formate--tetrahydrofolate ligase from Neisseria meningitidis serogroup C (strain 053442).